A 221-amino-acid polypeptide reads, in one-letter code: Eukaryotic translation initiation factor 4E-2 (221 aa).

The span at 1–20 (MADELNKAALEEYKSSSVED) shows a compositional bias: basic and acidic residues. Residues 1–36 (MADELNKAALEEYKSSSVEDRGEEGEIVGESDDTAS) are disordered. The segment covering 21-33 (RGEEGEIVGESDD) has biased composition (acidic residues). EIF4G-binding regions lie at residues 46 to 49 (HPLE) and 56 to 92 (FDNP…NNIH). Residues 64–69 (KQAAWG), lysine 96, and 114–115 (WE) each bind mRNA. Cysteines 119 and 157 form a disulfide. The EIF4G-binding stretch occupies residues 140–149 (YTLLALIGEQ). MRNA is bound by residues 164–169 (RVRQEK) and 209–213 (KKLDR).

This sequence belongs to the eukaryotic initiation factor 4E family. In terms of assembly, EIF4F is a multi-subunit complex, the composition of which varies with external and internal environmental conditions. It is composed of at least EIF4A, EIF4E and EIF4G. EIF4E is also known to interact with other partners. In higher plants two isoforms of EIF4F have been identified, named isoform EIF4F and isoform EIF(iso)4F. Isoform EIF4F has subunits p220 and p26, whereas isoform EIF(iso)4F has subunits p82 and p28. (Microbial infection) Interacts with potyvirus viral genome-linked protein (VPg) in the nucleus; mostly potato virus Y (PVY-LYE84) and tobacco etch virus (TEV-HAT) VPg, but not with PVY-LYE90 and pepper mottle virus (PepMoV) VPg; these interactions are possible in susceptible hosts but impaired in resistant plants. Post-translationally, according to the redox status, the Cys-119-Cys-157 disulfide bridge may have a role in regulating protein function by affecting its ability to bind capped mRNA.

The protein resides in the nucleus. Its subcellular location is the cytoplasm. Functionally, component of the protein complex eIF4F, which is involved in the recognition of the mRNA cap, ATP-dependent unwinding of 5'-terminal secondary structure and recruitment of mRNA to the ribosome. Recognizes and binds the 7-methylguanosine-containing mRNA cap during an early step in the initiation of protein synthesis and facilitates ribosome binding by inducing the unwinding of the mRNAs secondary structures. Key component of recessive resistance to potyviruses. Its function is as follows. (Microbial infection) Susceptibility host factor required for viral infection (e.g. potato virus Y (PVY) and tobacco etch virus (TEV)) by recruiting viral RNAs to the host ribosomal complex via an interaction with viral genome-linked protein (VPg). This is Eukaryotic translation initiation factor 4E-2 from Solanum lycopersicum (Tomato).